We begin with the raw amino-acid sequence, 310 residues long: Protein-L-isoaspartate O-methyltransferase (310 aa).

2 disordered regions span residues 1-44 and 67-88; these read MSGE…DKPA and AKPA…PAAP. Positions 14–29 are enriched in basic and acidic residues; sequence EDLKRAPRKSEGRPGE. Over residues 32-44 the composition is skewed to low complexity; it reads AAGAVPKAADKPA. The segment covering 75–86 has biased composition (pro residues); sequence PTAPKPALPKPA. Residue serine 157 is part of the active site.

The protein belongs to the methyltransferase superfamily. L-isoaspartyl/D-aspartyl protein methyltransferase family.

The protein resides in the cytoplasm. The catalysed reaction is [protein]-L-isoaspartate + S-adenosyl-L-methionine = [protein]-L-isoaspartate alpha-methyl ester + S-adenosyl-L-homocysteine. In terms of biological role, catalyzes the methyl esterification of L-isoaspartyl residues in peptides and proteins that result from spontaneous decomposition of normal L-aspartyl and L-asparaginyl residues. It plays a role in the repair and/or degradation of damaged proteins. The sequence is that of Protein-L-isoaspartate O-methyltransferase from Burkholderia orbicola (strain MC0-3).